The chain runs to 388 residues: Chorismate synthase (388 aa).

NADP(+)-binding residues include arginine 39 and arginine 45. FMN-binding positions include 130–132 (RSS), 251–252 (NA), glycine 296, 311–315 (KPIPT), and arginine 337.

This sequence belongs to the chorismate synthase family. Homotetramer. It depends on FMNH2 as a cofactor.

It catalyses the reaction 5-O-(1-carboxyvinyl)-3-phosphoshikimate = chorismate + phosphate. It functions in the pathway metabolic intermediate biosynthesis; chorismate biosynthesis; chorismate from D-erythrose 4-phosphate and phosphoenolpyruvate: step 7/7. Functionally, catalyzes the anti-1,4-elimination of the C-3 phosphate and the C-6 proR hydrogen from 5-enolpyruvylshikimate-3-phosphate (EPSP) to yield chorismate, which is the branch point compound that serves as the starting substrate for the three terminal pathways of aromatic amino acid biosynthesis. This reaction introduces a second double bond into the aromatic ring system. This Streptococcus pyogenes serotype M2 (strain MGAS10270) protein is Chorismate synthase.